The sequence spans 593 residues: Cryptochrome-2 (593 aa).

A Photolyase/cryptochrome alpha/beta domain is found at alanine 22–leucine 151. Lysine 30 is covalently cross-linked (Glycyl lysine isopeptide (Lys-Gly) (interchain with G-Cter in ubiquitin)). Serine 90 carries the phosphoserine modification. Glycyl lysine isopeptide (Lys-Gly) (interchain with G-Cter in ubiquitin) cross-links involve residues lysine 126 and lysine 242. A Phosphoserine; by MAPK modification is found at serine 266. Residue serine 271 participates in FAD binding. Serine 299 bears the Phosphoserine mark. Residue glutamine 308 participates in FAD binding. A Glycyl lysine isopeptide (Lys-Gly) (interchain with G-Cter in ubiquitin) cross-link involves residue lysine 348. FAD contacts are provided by residues histidine 374 and aspartate 406–aspartate 408. Residues tryptophan 390–isoleucine 489 are required for inhibition of CLOCK-BMAL1-mediated transcription. Residues lysine 475 and lysine 504 each participate in a glycyl lysine isopeptide (Lys-Gly) (interchain with G-Cter in ubiquitin) cross-link. Positions proline 532–alanine 593 are disordered. The span at serine 537–glycine 548 shows a compositional bias: low complexity. Phosphoserine; by GSK3-beta is present on serine 554. Position 558 is a phosphoserine; by DYRK1A and MAPK (serine 558).

Belongs to the DNA photolyase class-1 family. In terms of assembly, component of the circadian core oscillator, which includes the CRY proteins, CLOCK or NPAS2, BMAL1 or BMAL2, CSNK1D and/or CSNK1E, TIMELESS, and the PER proteins. Interacts with TIMELESS. Interacts directly with PER1, PER2 and PER3; interaction with PER2 inhibits its ubiquitination and vice versa. Interacts with CLOCK-BMAL1. Interacts with CLOCK. Interacts with BMAL1. Interacts with NFIL3. Interacts with FBXL3. Interacts with FBXL21. FBXL3, PER2 and the cofactor FAD compete for overlapping binding sites. FBXL3 cannot bind CRY2 that interacts already with PER2 or that contains bound FAD. Interacts with PPP5C (via TPR repeats); the interaction down-regulates the PPP5C phosphatase activity on CSNK1E. Interacts with nuclear receptors AR and NR3C1/GR; the interaction is ligand dependent. Interacts with PRKDC and CIART. Interacts with ISCA1 (in vitro). Interacts with DDB1, USP7 and TARDBP. Interacts with HNF4A. Interacts with PPARA. Interacts with PPARD (via domain NR LBD) and NR1I2 (via domain NR LBD) in a ligand-dependent manner. Interacts with PPARG, NR1I3 and VDR in a ligand-dependent manner. Requires FAD as cofactor. (6R)-5,10-methylene-5,6,7,8-tetrahydrofolate is required as a cofactor. In terms of processing, phosphorylation on Ser-266 by MAPK is important for the inhibition of CLOCK-BMAL1-mediated transcriptional activity. Phosphorylation by CSKNE requires interaction with PER1 or PER2. Phosphorylated in a circadian manner at Ser-554 and Ser-558 in the suprachiasmatic nucleus (SCN) and liver. Phosphorylation at Ser-558 by DYRK1A promotes subsequent phosphorylation at Ser-554 by GSK3-beta: the two-step phosphorylation at the neighboring Ser residues leads to its proteasomal degradation. Ubiquitinated by the SCF(FBXL3) and SCF(FBXL21) complexes, regulating the balance between degradation and stabilization. The SCF(FBXL3) complex is mainly nuclear and mediates ubiquitination and subsequent degradation of CRY2. In contrast, cytoplasmic SCF(FBXL21) complex-mediated ubiquitination leads to stabilize CRY2 and counteract the activity of the SCF(FBXL3) complex. The SCF(FBXL3) and SCF(FBXL21) complexes probably mediate ubiquitination at different Lys residues. The SCF(FBXL3) complex recognizes and binds CRY2 phosphorylated at Ser-554 and Ser-558. Ubiquitination may be inhibited by PER2. Deubiquitinated by USP7. As to expression, expressed in all tissues examined including fetal brain, fibroblasts, heart, brain, placenta, lung, liver, skeletal muscle, kidney, pancreas, spleen, thymus, prostate, testis, ovary, small intestine, colon and leukocytes. Highest levels in heart and skeletal muscle.

It is found in the cytoplasm. It localises to the nucleus. With respect to regulation, KL001 (N-[3-(9H-carbazol-9-yl)-2-hydroxypropyl]-N-(2-furanylmethyl)-methanesulfonamide) binds to CRY1 and stabilizes it by inhibiting FBXL3- and ubiquitin-dependent degradation of CRY1 resulting in lengthening of the circadian periods. Its function is as follows. Transcriptional repressor which forms a core component of the circadian clock. The circadian clock, an internal time-keeping system, regulates various physiological processes through the generation of approximately 24 hour circadian rhythms in gene expression, which are translated into rhythms in metabolism and behavior. It is derived from the Latin roots 'circa' (about) and 'diem' (day) and acts as an important regulator of a wide array of physiological functions including metabolism, sleep, body temperature, blood pressure, endocrine, immune, cardiovascular, and renal function. Consists of two major components: the central clock, residing in the suprachiasmatic nucleus (SCN) of the brain, and the peripheral clocks that are present in nearly every tissue and organ system. Both the central and peripheral clocks can be reset by environmental cues, also known as Zeitgebers (German for 'timegivers'). The predominant Zeitgeber for the central clock is light, which is sensed by retina and signals directly to the SCN. The central clock entrains the peripheral clocks through neuronal and hormonal signals, body temperature and feeding-related cues, aligning all clocks with the external light/dark cycle. Circadian rhythms allow an organism to achieve temporal homeostasis with its environment at the molecular level by regulating gene expression to create a peak of protein expression once every 24 hours to control when a particular physiological process is most active with respect to the solar day. Transcription and translation of core clock components (CLOCK, NPAS2, BMAL1, BMAL2, PER1, PER2, PER3, CRY1 and CRY2) plays a critical role in rhythm generation, whereas delays imposed by post-translational modifications (PTMs) are important for determining the period (tau) of the rhythms (tau refers to the period of a rhythm and is the length, in time, of one complete cycle). A diurnal rhythm is synchronized with the day/night cycle, while the ultradian and infradian rhythms have a period shorter and longer than 24 hours, respectively. Disruptions in the circadian rhythms contribute to the pathology of cardiovascular diseases, cancer, metabolic syndromes and aging. A transcription/translation feedback loop (TTFL) forms the core of the molecular circadian clock mechanism. Transcription factors, CLOCK or NPAS2 and BMAL1 or BMAL2, form the positive limb of the feedback loop, act in the form of a heterodimer and activate the transcription of core clock genes and clock-controlled genes (involved in key metabolic processes), harboring E-box elements (5'-CACGTG-3') within their promoters. The core clock genes: PER1/2/3 and CRY1/2 which are transcriptional repressors form the negative limb of the feedback loop and interact with the CLOCK|NPAS2-BMAL1|BMAL2 heterodimer inhibiting its activity and thereby negatively regulating their own expression. This heterodimer also activates nuclear receptors NR1D1/2 and RORA/B/G, which form a second feedback loop and which activate and repress BMAL1 transcription, respectively. CRY1 and CRY2 have redundant functions but also differential and selective contributions at least in defining the pace of the SCN circadian clock and its circadian transcriptional outputs. Less potent transcriptional repressor in cerebellum and liver than CRY1, though less effective in lengthening the period of the SCN oscillator. Seems to play a critical role in tuning SCN circadian period by opposing the action of CRY1. With CRY1, dispensable for circadian rhythm generation but necessary for the development of intercellular networks for rhythm synchrony. May mediate circadian regulation of cAMP signaling and gluconeogenesis by blocking glucagon-mediated increases in intracellular cAMP concentrations and in CREB1 phosphorylation. Besides its role in the maintenance of the circadian clock, is also involved in the regulation of other processes. Plays a key role in glucose and lipid metabolism modulation, in part, through the transcriptional regulation of genes involved in these pathways, such as LEP or ACSL4. Represses glucocorticoid receptor NR3C1/GR-induced transcriptional activity by binding to glucocorticoid response elements (GREs). Represses the CLOCK-BMAL1 induced transcription of BHLHE40/DEC1. Represses the CLOCK-BMAL1 induced transcription of NAMPT. Represses PPARD and its target genes in the skeletal muscle and limits exercise capacity. Represses the transcriptional activity of NR1I2. The protein is Cryptochrome-2 (CRY2) of Homo sapiens (Human).